The sequence spans 128 residues: Large ribosomal subunit protein bL20 (128 aa).

This sequence belongs to the bacterial ribosomal protein bL20 family.

Its function is as follows. Binds directly to 23S ribosomal RNA and is necessary for the in vitro assembly process of the 50S ribosomal subunit. It is not involved in the protein synthesizing functions of that subunit. The polypeptide is Large ribosomal subunit protein bL20 (Anaplasma marginale (strain Florida)).